The chain runs to 339 residues: Heat-inducible transcription repressor HrcA (339 aa).

The protein belongs to the HrcA family.

Its function is as follows. Negative regulator of class I heat shock genes (grpE-dnaK-dnaJ and groELS operons). Prevents heat-shock induction of these operons. The polypeptide is Heat-inducible transcription repressor HrcA (Leifsonia xyli subsp. xyli (strain CTCB07)).